We begin with the raw amino-acid sequence, 249 residues long: Triosephosphate isomerase (249 aa).

Position 9-11 (9-11 (NWK)) interacts with substrate. The active-site Electrophile is His95. Catalysis depends on Glu165, which acts as the Proton acceptor. Residues Gly171, Ser210, and 231–232 (GG) each bind substrate.

It belongs to the triosephosphate isomerase family. In terms of assembly, homodimer.

The protein localises to the cytoplasm. It carries out the reaction D-glyceraldehyde 3-phosphate = dihydroxyacetone phosphate. It functions in the pathway carbohydrate biosynthesis; gluconeogenesis. The protein operates within carbohydrate degradation; glycolysis; D-glyceraldehyde 3-phosphate from glycerone phosphate: step 1/1. In terms of biological role, involved in the gluconeogenesis. Catalyzes stereospecifically the conversion of dihydroxyacetone phosphate (DHAP) to D-glyceraldehyde-3-phosphate (G3P). The sequence is that of Triosephosphate isomerase from Hyphomonas neptunium (strain ATCC 15444).